Here is a 266-residue protein sequence, read N- to C-terminus: Thymidylate synthase (266 aa).

Arginine 24 is a dUMP binding site. A (6R)-5,10-methylene-5,6,7,8-tetrahydrofolate-binding site is contributed by histidine 54. 129 to 130 (RR) lines the dUMP pocket. Catalysis depends on cysteine 149, which acts as the Nucleophile. DUMP-binding positions include 169 to 172 (RSAD), asparagine 180, and 210 to 212 (HIY). Aspartate 172 serves as a coordination point for (6R)-5,10-methylene-5,6,7,8-tetrahydrofolate. Residue alanine 265 participates in (6R)-5,10-methylene-5,6,7,8-tetrahydrofolate binding.

It belongs to the thymidylate synthase family. Bacterial-type ThyA subfamily. In terms of assembly, homodimer.

It is found in the cytoplasm. It carries out the reaction dUMP + (6R)-5,10-methylene-5,6,7,8-tetrahydrofolate = 7,8-dihydrofolate + dTMP. It functions in the pathway pyrimidine metabolism; dTTP biosynthesis. Functionally, catalyzes the reductive methylation of 2'-deoxyuridine-5'-monophosphate (dUMP) to 2'-deoxythymidine-5'-monophosphate (dTMP) while utilizing 5,10-methylenetetrahydrofolate (mTHF) as the methyl donor and reductant in the reaction, yielding dihydrofolate (DHF) as a by-product. This enzymatic reaction provides an intracellular de novo source of dTMP, an essential precursor for DNA biosynthesis. This chain is Thymidylate synthase, found in Mycobacterium avium (strain 104).